A 202-amino-acid polypeptide reads, in one-letter code: MKLLHIDSSILGDASASRQLSAELVQAWRQNEDGLDVTYRDLAADAVAHFSALTLAAGSTPAELRDAALKHEVAVGEEVLEEFLAADVVVIGAPMYNFTISSQLKAWIDRIAVAGKTFRYTENGPVGLAGDKKVVIVSTAGGVHAGQPTGAAHEGYLRTVLGFFGITDIEVVRAEGLAYGEEPRTQAIAAARRQIAGQFAAA.

Residues Ser9, 15–17 (SAS), 95–98 (MYNF), and 139–142 (TAGG) each bind FMN.

It belongs to the azoreductase type 1 family. As to quaternary structure, homodimer. It depends on FMN as a cofactor.

It carries out the reaction 2 a quinone + NADH + H(+) = 2 a 1,4-benzosemiquinone + NAD(+). The catalysed reaction is N,N-dimethyl-1,4-phenylenediamine + anthranilate + 2 NAD(+) = 2-(4-dimethylaminophenyl)diazenylbenzoate + 2 NADH + 2 H(+). Quinone reductase that provides resistance to thiol-specific stress caused by electrophilic quinones. Reduces both benzoquinones and naphthoquinones efficiently. In terms of biological role, also exhibits azoreductase activity. Catalyzes the reductive cleavage of the azo bond in aromatic azo compounds to the corresponding amines. Preferred substrates are the large bis-azo dye Ponceau BS, amaranth and tropaeolin O. This is FMN-dependent NADH:quinone oxidoreductase 2 from Pseudomonas aeruginosa (strain ATCC 15692 / DSM 22644 / CIP 104116 / JCM 14847 / LMG 12228 / 1C / PRS 101 / PAO1).